The sequence spans 167 residues: CDP-archaeol synthase (167 aa).

5 helical membrane-spanning segments follow: residues 4-24, 51-71, 80-100, 104-124, and 139-158; these read ILEAFWYILPAYFANSSPVIL, GFLGGLTVGTLIGVIQQIIYP, FKVSFLLALGALVGDLIGSFI, LNLPPGYPAVGLDQWGFLISA, and VLLLLVVTPLIHWGTNVLAY.

The protein belongs to the CDP-archaeol synthase family. Mg(2+) is required as a cofactor.

The protein localises to the cell membrane. It catalyses the reaction 2,3-bis-O-(geranylgeranyl)-sn-glycerol 1-phosphate + CTP + H(+) = CDP-2,3-bis-O-(geranylgeranyl)-sn-glycerol + diphosphate. Its pathway is membrane lipid metabolism; glycerophospholipid metabolism. In terms of biological role, catalyzes the formation of CDP-2,3-bis-(O-geranylgeranyl)-sn-glycerol (CDP-archaeol) from 2,3-bis-(O-geranylgeranyl)-sn-glycerol 1-phosphate (DGGGP) and CTP. This reaction is the third ether-bond-formation step in the biosynthesis of archaeal membrane lipids. The sequence is that of CDP-archaeol synthase from Pyrococcus furiosus (strain ATCC 43587 / DSM 3638 / JCM 8422 / Vc1).